The sequence spans 311 residues: Catabolite control protein B (311 aa).

In terms of domain architecture, HTH lacI-type spans 1–56; that stretch reads MANIKEIARLANVSVSTVSRVLNHHPYVSEEKRKLVHQVMKELDYTPNRTAIDLIR. The H-T-H motif DNA-binding region spans 4–23; it reads IKEIARLANVSVSTVSRVLN.

In terms of assembly, seems to be complexed to phosphorylated HPr.

Its function is as follows. Transcriptional regulator involved in catabolite repression of several operons. This is Catabolite control protein B (ccpB) from Bacillus subtilis (strain 168).